The sequence spans 80 residues: uncharacterized protein (80 aa).

The disordered stretch occupies residues 57–80 (GNIDSDVSDQDQIGNPSAPISNQI).

This is an uncharacterized protein from Bacillus subtilis (strain 168).